Consider the following 325-residue polypeptide: Elongation factor P--(R)-beta-lysine ligase (325 aa).

76–78 (SPE) lines the substrate pocket. ATP contacts are provided by residues 100 to 102 (RNE) and Asn-109. Tyr-118 is a binding site for substrate. Position 244-245 (244-245 (EL)) interacts with ATP. Position 251 (Glu-251) interacts with substrate. Gly-300 provides a ligand contact to ATP.

Belongs to the class-II aminoacyl-tRNA synthetase family. EpmA subfamily. In terms of assembly, homodimer.

It carries out the reaction D-beta-lysine + L-lysyl-[protein] + ATP = N(6)-((3R)-3,6-diaminohexanoyl)-L-lysyl-[protein] + AMP + diphosphate + H(+). With EpmB is involved in the beta-lysylation step of the post-translational modification of translation elongation factor P (EF-P) on 'Lys-34'. Catalyzes the ATP-dependent activation of (R)-beta-lysine produced by EpmB, forming a lysyl-adenylate, from which the beta-lysyl moiety is then transferred to the epsilon-amino group of EF-P 'Lys-34'. This Salmonella gallinarum (strain 287/91 / NCTC 13346) protein is Elongation factor P--(R)-beta-lysine ligase.